The chain runs to 367 residues: Queuine tRNA-ribosyltransferase (367 aa).

The active-site Proton acceptor is the D89. Residues 89–93, D143, Q185, and G212 each bind substrate; that span reads DSGGF. The RNA binding stretch occupies residues 243–249; the sequence is GVGTPSD. Residue D262 is the Nucleophile of the active site. Residues 267–271 form an RNA binding; important for wobble base 34 recognition region; it reads TRNAR. Zn(2+) contacts are provided by C300, C302, C305, and H331.

The protein belongs to the queuine tRNA-ribosyltransferase family. Homodimer. Within each dimer, one monomer is responsible for RNA recognition and catalysis, while the other monomer binds to the replacement base PreQ1. It depends on Zn(2+) as a cofactor.

The enzyme catalyses 7-aminomethyl-7-carbaguanine + guanosine(34) in tRNA = 7-aminomethyl-7-carbaguanosine(34) in tRNA + guanine. It participates in tRNA modification; tRNA-queuosine biosynthesis. Its function is as follows. Catalyzes the base-exchange of a guanine (G) residue with the queuine precursor 7-aminomethyl-7-deazaguanine (PreQ1) at position 34 (anticodon wobble position) in tRNAs with GU(N) anticodons (tRNA-Asp, -Asn, -His and -Tyr). Catalysis occurs through a double-displacement mechanism. The nucleophile active site attacks the C1' of nucleotide 34 to detach the guanine base from the RNA, forming a covalent enzyme-RNA intermediate. The proton acceptor active site deprotonates the incoming PreQ1, allowing a nucleophilic attack on the C1' of the ribose to form the product. After dissociation, two additional enzymatic reactions on the tRNA convert PreQ1 to queuine (Q), resulting in the hypermodified nucleoside queuosine (7-(((4,5-cis-dihydroxy-2-cyclopenten-1-yl)amino)methyl)-7-deazaguanosine). The protein is Queuine tRNA-ribosyltransferase of Thiobacillus denitrificans (strain ATCC 25259 / T1).